The sequence spans 186 residues: Protein FAM219A (186 aa).

Disordered regions lie at residues 1–47 (MMEE…NYKP) and 59–132 (ELAR…GYSS). Residues 67–81 (KNGTVGSPVNQQPKK) show a composition bias toward polar residues. The segment covering 123–132 (SRYSSSGYSS) has biased composition (low complexity).

This sequence belongs to the FAM219 family.

In Danio rerio (Zebrafish), this protein is Protein FAM219A (fam219a).